The primary structure comprises 97 residues: Aspartyl/glutamyl-tRNA(Asn/Gln) amidotransferase subunit C (97 aa).

The protein belongs to the GatC family. In terms of assembly, heterotrimer of A, B and C subunits.

It catalyses the reaction L-glutamyl-tRNA(Gln) + L-glutamine + ATP + H2O = L-glutaminyl-tRNA(Gln) + L-glutamate + ADP + phosphate + H(+). The catalysed reaction is L-aspartyl-tRNA(Asn) + L-glutamine + ATP + H2O = L-asparaginyl-tRNA(Asn) + L-glutamate + ADP + phosphate + 2 H(+). Functionally, allows the formation of correctly charged Asn-tRNA(Asn) or Gln-tRNA(Gln) through the transamidation of misacylated Asp-tRNA(Asn) or Glu-tRNA(Gln) in organisms which lack either or both of asparaginyl-tRNA or glutaminyl-tRNA synthetases. The reaction takes place in the presence of glutamine and ATP through an activated phospho-Asp-tRNA(Asn) or phospho-Glu-tRNA(Gln). The chain is Aspartyl/glutamyl-tRNA(Asn/Gln) amidotransferase subunit C from Parasynechococcus marenigrum (strain WH8102).